We begin with the raw amino-acid sequence, 91 residues long: C-C motif chemokine 5 (91 aa).

The signal sequence occupies residues methionine 1–alanine 23. 2 disulfides stabilise this stretch: cysteine 33-cysteine 57 and cysteine 34-cysteine 73.

It belongs to the intercrine beta (chemokine CC) family.

It is found in the secreted. In terms of biological role, chemoattractant for blood monocytes, memory T-helper cells and eosinophils. Causes the release of histamine from basophils and activates eosinophils. May activate several chemokine receptors including CCR1, CCR3, CCR4 and CCR5. May also be an agonist of the G protein-coupled receptor GPR75. Together with GPR75, may play a role in neuron survival through activation of a downstream signaling pathway involving the PI3, Akt and MAP kinases. By activating GPR75 may also play a role in insulin secretion by islet cells. The chain is C-C motif chemokine 5 (CCL5) from Equus caballus (Horse).